A 139-amino-acid polypeptide reads, in one-letter code: Large ribosomal subunit protein uL16 (139 aa).

Basic residues predominate over residues 1–19; sequence MLIPRRVKYRKQHHPKRTG. Residues 1 to 23 are disordered; the sequence is MLIPRRVKYRKQHHPKRTGAAKG.

This sequence belongs to the universal ribosomal protein uL16 family. As to quaternary structure, part of the 50S ribosomal subunit.

Functionally, binds 23S rRNA and is also seen to make contacts with the A and possibly P site tRNAs. This Cutibacterium acnes (strain DSM 16379 / KPA171202) (Propionibacterium acnes) protein is Large ribosomal subunit protein uL16.